The chain runs to 334 residues: GTPase Obg (334 aa).

Positions 4 to 162 constitute an Obg domain; it reads FDFIDEVKKY…GWIKLELKLL (159 aa). An OBG-type G domain is found at 163–330; it reads AEVGLVGFPN…FKDKIWKLLH (168 aa). GTP is bound by residues 169-176, 194-198, 216-219, 284-287, and 311-313; these read GFPNAGKS, FTTLV, DMPG, SKLD, and SSV. Residues Ser-176 and Thr-196 each contribute to the Mg(2+) site.

It belongs to the TRAFAC class OBG-HflX-like GTPase superfamily. OBG GTPase family. As to quaternary structure, monomer. Requires Mg(2+) as cofactor.

The protein localises to the cytoplasm. Functionally, an essential GTPase which binds GTP, GDP and possibly (p)ppGpp with moderate affinity, with high nucleotide exchange rates and a fairly low GTP hydrolysis rate. Plays a role in control of the cell cycle, stress response, ribosome biogenesis and in those bacteria that undergo differentiation, in morphogenesis control. The chain is GTPase Obg from Amoebophilus asiaticus (strain 5a2).